Consider the following 216-residue polypeptide: Thiopurine S-methyltransferase (216 aa).

Residues tryptophan 11, leucine 46, glutamate 67, and arginine 122 each coordinate S-adenosyl-L-methionine.

Belongs to the class I-like SAM-binding methyltransferase superfamily. TPMT family.

The protein resides in the cytoplasm. The enzyme catalyses S-adenosyl-L-methionine + a thiopurine = S-adenosyl-L-homocysteine + a thiopurine S-methylether.. This Vibrio parahaemolyticus serotype O3:K6 (strain RIMD 2210633) protein is Thiopurine S-methyltransferase.